A 365-amino-acid chain; its full sequence is Class I histocompatibility antigen, Gogo-A*0201 alpha chain (365 aa).

The signal sequence occupies residues 1–24 (MAVMAPRTLLLLLLGALALTQTWA). Residues 25 to 114 (GSHSMRYFST…LRGYYNQSEA (90 aa)) are alpha-1. The Extracellular segment spans residues 25 to 308 (GSHSMRYFST…EPSSQPTIPI (284 aa)). Asn-110 is a glycosylation site (N-linked (GlcNAc...) asparagine). The alpha-2 stretch occupies residues 115-206 (GSHTIQKMYG…ENGKETLQRT (92 aa)). Disulfide bonds link Cys-125–Cys-188 and Cys-227–Cys-283. An alpha-3 region spans residues 207 to 298 (DAPKTHMTHH…SLPKPLTLRW (92 aa)). One can recognise an Ig-like C1-type domain in the interval 209–295 (PKTHMTHHAV…QHESLPKPLT (87 aa)). Positions 299-308 (EPSSQPTIPI) are connecting peptide. The helical transmembrane segment at 309-332 (VGIIAGLVLFGAVIAGAVIAAVRW) threads the bilayer. The Cytoplasmic portion of the chain corresponds to 333-365 (RRKSSDRKGGSYSQAASSDSAQGSDVSLTACKV). Residues 338-365 (DRKGGSYSQAASSDSAQGSDVSLTACKV) form a disordered region. Low complexity predominate over residues 342 to 359 (GSYSQAASSDSAQGSDVS). Ser-343 carries the phosphoserine modification. Position 344 is a phosphotyrosine (Tyr-344). A phosphoserine mark is found at Ser-345, Ser-349, Ser-350, Ser-352, Ser-356, and Ser-359.

It belongs to the MHC class I family. As to quaternary structure, heterodimer of an alpha chain and a beta chain (beta-2-microglobulin).

The protein localises to the membrane. Involved in the presentation of foreign antigens to the immune system. The protein is Class I histocompatibility antigen, Gogo-A*0201 alpha chain of Gorilla gorilla gorilla (Western lowland gorilla).